The sequence spans 274 residues: Exosome complex component Rrp42 (274 aa).

The protein belongs to the RNase PH family. Rrp42 subfamily. As to quaternary structure, component of the archaeal exosome complex. Forms a hexameric ring-like arrangement composed of 3 Rrp41-Rrp42 heterodimers. The hexameric ring associates with a trimer of Rrp4 and/or Csl4 subunits.

The protein resides in the cytoplasm. Non-catalytic component of the exosome, which is a complex involved in RNA degradation. Contributes to the structuring of the Rrp41 active site. The polypeptide is Exosome complex component Rrp42 (Pyrococcus horikoshii (strain ATCC 700860 / DSM 12428 / JCM 9974 / NBRC 100139 / OT-3)).